Reading from the N-terminus, the 386-residue chain is S-adenosylmethionine synthase (386 aa).

E8 contributes to the Mg(2+) binding site. H14 contributes to the ATP binding site. E42 contacts K(+). Residues E55 and Q98 each coordinate L-methionine. ATP contacts are provided by residues 166–168, 234–237, D245, 251–252, A268, K272, and K276; these read DGK, SGRF, and RK. D245 contributes to the L-methionine binding site. Position 276 (K276) interacts with L-methionine.

This sequence belongs to the AdoMet synthase family. Homotetramer. Requires Mn(2+) as cofactor. Mg(2+) serves as cofactor. It depends on Co(2+) as a cofactor. K(+) is required as a cofactor.

The protein localises to the cytoplasm. The catalysed reaction is L-methionine + ATP + H2O = S-adenosyl-L-methionine + phosphate + diphosphate. The protein operates within amino-acid biosynthesis; S-adenosyl-L-methionine biosynthesis; S-adenosyl-L-methionine from L-methionine: step 1/1. Its function is as follows. Catalyzes the formation of S-adenosylmethionine from methionine and ATP. The reaction comprises two steps that are both catalyzed by the same enzyme: formation of S-adenosylmethionine (AdoMet) and triphosphate, and subsequent hydrolysis of the triphosphate. In Ostreococcus tauri, this protein is S-adenosylmethionine synthase (METK).